The primary structure comprises 439 residues: Xaa-Pro dipeptidase (439 aa).

The Mn(2+) site is built by Asp-244, Asp-255, His-335, Glu-380, and Glu-419.

Belongs to the peptidase M24B family. Bacterial-type prolidase subfamily. Mn(2+) serves as cofactor.

It carries out the reaction Xaa-L-Pro dipeptide + H2O = an L-alpha-amino acid + L-proline. Its function is as follows. Splits dipeptides with a prolyl residue in the C-terminal position. The sequence is that of Xaa-Pro dipeptidase from Shewanella woodyi (strain ATCC 51908 / MS32).